Here is a 663-residue protein sequence, read N- to C-terminus: MIDKRDDKPFKLKSKYKPSGDQPQAIESLVDNIEGGEKAQILLGATGTGKTYTMSQVISKVNKPTLVIAHNKTLAGQLYGEFKEFFPDNAVEYFVSYYDYYQPEAYVPSSDTYIEKDSSVNDEIDKLRHSATSSLLERNDVIVVASVSCIYGLGSPKEYADSAVSLRPGQEISRDTLLNQLVDIQFERNDIDFQRGCFRVRGDVVEVFPASRDEHAFRVEFFGDEIDRICEIESLTGKTIGEVDHLVLFPATHFVTNDEHMEQSIAKIQAELAEQLQLFESEGKLLEAQRLRQRTEYDIEMLREMGYTSGVENYSRHMDGRSPGEPPYTLLDFFPEDFLIMIDESHMTMGQIKGMYNGDQARKQMLVDYGFRLPSALDNRPLRRKEFESHVHQIVYVSATPGEYEMSQTNTIIEQIIRPTGLLDPEIDVRPSMGQMDDLLGEINQRVARDERTFITTLTKKMAEDLTDYLKEMGVKVKYMHSDIKTLERTEIIRDLRLGVFDVLIGINLLREGIDVPEVSLVAILDADKEGFLRNERGLIQTIGRAARNVDGHVIMYADKMTDSMQRAIDETARRREIQIAYNKAHGIVPQTIKKDIRGFISISKTSHNDISKEEMDYESMSRGERKEAINALQKQMQEAAELLDFELAAQMRDLILELKLMD.

The span at 1-10 (MIDKRDDKPF) shows a compositional bias: basic and acidic residues. The tract at residues 1–23 (MIDKRDDKPFKLKSKYKPSGDQP) is disordered. The region spanning 31–418 (DNIEGGEKAQ…TNTIIEQIIR (388 aa)) is the Helicase ATP-binding domain. Residue 44-51 (GATGTGKT) participates in ATP binding. Residues 97 to 120 (YYDYYQPEAYVPSSDTYIEKDSSV) carry the Beta-hairpin motif. Residues 435–597 (QMDDLLGEIN…IVPQTIKKDI (163 aa)) form the Helicase C-terminal domain. Positions 627–662 (KEAINALQKQMQEAAELLDFELAAQMRDLILELKLM) constitute a UVR domain.

Belongs to the UvrB family. Forms a heterotetramer with UvrA during the search for lesions. Interacts with UvrC in an incision complex.

The protein resides in the cytoplasm. Functionally, the UvrABC repair system catalyzes the recognition and processing of DNA lesions. A damage recognition complex composed of 2 UvrA and 2 UvrB subunits scans DNA for abnormalities. Upon binding of the UvrA(2)B(2) complex to a putative damaged site, the DNA wraps around one UvrB monomer. DNA wrap is dependent on ATP binding by UvrB and probably causes local melting of the DNA helix, facilitating insertion of UvrB beta-hairpin between the DNA strands. Then UvrB probes one DNA strand for the presence of a lesion. If a lesion is found the UvrA subunits dissociate and the UvrB-DNA preincision complex is formed. This complex is subsequently bound by UvrC and the second UvrB is released. If no lesion is found, the DNA wraps around the other UvrB subunit that will check the other stand for damage. In Streptococcus pyogenes serotype M18 (strain MGAS8232), this protein is UvrABC system protein B.